The following is a 116-amino-acid chain: Large ribosomal subunit protein uL18 (116 aa).

Belongs to the universal ribosomal protein uL18 family. In terms of assembly, part of the 50S ribosomal subunit; part of the 5S rRNA/L5/L18/L25 subcomplex. Contacts the 5S and 23S rRNAs.

Its function is as follows. This is one of the proteins that bind and probably mediate the attachment of the 5S RNA into the large ribosomal subunit, where it forms part of the central protuberance. This Mycoplasma mycoides subsp. mycoides SC (strain CCUG 32753 / NCTC 10114 / PG1) protein is Large ribosomal subunit protein uL18.